Consider the following 205-residue polypeptide: Endoplasmic reticulum membrane protein complex subunit 10 (205 aa).

An N-terminal signal peptide occupies residues 1–17; sequence MLVRLLRVILLASMVFC. Residues 18-172 are Lumenal-facing; that stretch reads ADILQLSYSD…VKEVSWFQKN (155 aa). The N-linked (GlcNAc...) asparagine glycan is linked to asparagine 47. Residues 173-190 form a helical membrane-spanning segment; sequence WKMLLLGLLIYNFVAGSA. Topologically, residues 191–205 are cytoplasmic; it reads KKQQQGGAGADQKTE.

In terms of assembly, component of the ER membrane protein complex (EMC).

The protein resides in the endoplasmic reticulum membrane. In terms of biological role, part of the endoplasmic reticulum membrane protein complex (EMC) that enables the energy-independent insertion into endoplasmic reticulum membranes of newly synthesized membrane proteins. Preferentially accommodates proteins with transmembrane domains that are weakly hydrophobic or contain destabilizing features such as charged and aromatic residues. Involved in the cotranslational insertion of multi-pass membrane proteins in which stop-transfer membrane-anchor sequences become ER membrane spanning helices. It is also required for the post-translational insertion of tail-anchored/TA proteins in endoplasmic reticulum membranes. By mediating the proper cotranslational insertion of N-terminal transmembrane domains in an N-exo topology, with translocated N-terminus in the lumen of the ER, controls the topology of multi-pass membrane proteins. This chain is Endoplasmic reticulum membrane protein complex subunit 10, found in Saccharomyces cerevisiae (strain ATCC 204508 / S288c) (Baker's yeast).